The following is a 218-amino-acid chain: Pyridoxine/pyridoxamine 5'-phosphate oxidase (218 aa).

Substrate is bound by residues 14–17 (RREY) and K72. FMN-binding positions include 67 to 72 (RIVLLK), 82 to 83 (YT), R88, K89, and Q111. Substrate contacts are provided by Y129, R133, and S137. Residues 146–147 (QS) and W191 each bind FMN. Residue 197–199 (RLH) coordinates substrate. R201 contacts FMN.

This sequence belongs to the pyridoxamine 5'-phosphate oxidase family. In terms of assembly, homodimer. FMN serves as cofactor.

The enzyme catalyses pyridoxamine 5'-phosphate + O2 + H2O = pyridoxal 5'-phosphate + H2O2 + NH4(+). The catalysed reaction is pyridoxine 5'-phosphate + O2 = pyridoxal 5'-phosphate + H2O2. Its pathway is cofactor metabolism; pyridoxal 5'-phosphate salvage; pyridoxal 5'-phosphate from pyridoxamine 5'-phosphate: step 1/1. The protein operates within cofactor metabolism; pyridoxal 5'-phosphate salvage; pyridoxal 5'-phosphate from pyridoxine 5'-phosphate: step 1/1. Functionally, catalyzes the oxidation of either pyridoxine 5'-phosphate (PNP) or pyridoxamine 5'-phosphate (PMP) into pyridoxal 5'-phosphate (PLP). This chain is Pyridoxine/pyridoxamine 5'-phosphate oxidase, found in Cronobacter sakazakii (strain ATCC BAA-894) (Enterobacter sakazakii).